Here is a 380-residue protein sequence, read N- to C-terminus: Histidinol-phosphate aminotransferase 1 (380 aa).

Lys235 is subject to N6-(pyridoxal phosphate)lysine.

Belongs to the class-II pyridoxal-phosphate-dependent aminotransferase family. Histidinol-phosphate aminotransferase subfamily. As to quaternary structure, homodimer. Pyridoxal 5'-phosphate is required as a cofactor.

The enzyme catalyses L-histidinol phosphate + 2-oxoglutarate = 3-(imidazol-4-yl)-2-oxopropyl phosphate + L-glutamate. The protein operates within amino-acid biosynthesis; L-histidine biosynthesis; L-histidine from 5-phospho-alpha-D-ribose 1-diphosphate: step 7/9. The polypeptide is Histidinol-phosphate aminotransferase 1 (Psychrobacter arcticus (strain DSM 17307 / VKM B-2377 / 273-4)).